The sequence spans 281 residues: Tumor necrosis factor ligand superfamily member 6 (281 aa).

Residues 1–80 (MQQPFNYPYP…LKKRGNHSTG (80 aa)) are Cytoplasmic-facing. Residues 20–71 (SSPWAPPGTVLPCPTSVPRRPGQRRPPPPPPPPPLPPPPPPPPLPPLPLPPL) form a disordered region. Over residues 43–70 (RRPPPPPPPPPLPPPPPPPPLPPLPLPP) the composition is skewed to pro residues. Residues 81-102 (LCLLVMFFMVLVALVGLGLGMF) form a helical; Signal-anchor for type II membrane protein membrane-spanning segment. The Extracellular portion of the chain corresponds to 103–281 (QLFHLQKELA…SQTFFGLYKL (179 aa)). Over residues 118 to 128 (TSQMHTASSLE) the composition is skewed to polar residues. The interval 118 to 142 (TSQMHTASSLEKQIGHPSPPPEKKE) is disordered. The region spanning 145–281 (KVAHLTGKSN…SQTFFGLYKL (137 aa)) is the THD domain. Asparagine 184 is a glycosylation site (N-linked (GlcNAc...) asparagine). A disulfide bridge links cysteine 202 with cysteine 233. 2 N-linked (GlcNAc...) asparagine glycosylation sites follow: asparagine 250 and asparagine 260.

It belongs to the tumor necrosis factor family. In terms of assembly, homotrimer. Interacts with ARHGAP9, BAIAP2L1, BTK, CACNB3, CACNB4, CRK, DLG2, DNMBP, DOCK4, EPS8L3, FGR, FYB1, FYN, HCK, ITK, ITSN2, KALRN, LYN, MACC1, MIA, MPP4, MYO15A, NCF1, NCK1, NCK2, NCKIPSD, OSTF1, PIK3R1, PSTPIP1, RIMBP3C, SAMSN1, SH3GL3, SH3PXD2B, SH3PXD2A, SH3RF2, SKAP2, SNX33, SNX9, SORBS3, SPTA1, SRC, SRGAP1, SRGAP2, SRGAP3, TEC, TJP3 and YES1. The soluble form derives from the membrane form by proteolytic processing. The membrane-bound form undergoes two successive intramembrane proteolytic cleavages. The first one is processed by ADAM10 producing an N-terminal fragment, which lacks the receptor-binding extracellular domain. This ADAM10-processed FasL (FasL APL) remnant form is still membrane anchored and further processed by SPPL2A that liberates the FasL intracellular domain (FasL ICD). FasL shedding by ADAM10 is a prerequisite for subsequent intramembrane cleavage by SPPL2A in T-cells. In terms of processing, N-glycosylated. Glycosylation enhances apoptotic activity. Post-translationally, phosphorylated by FGR on tyrosine residues; this is required for ubiquitination and subsequent internalization. Monoubiquitinated.

Its subcellular location is the cell membrane. It localises to the cytoplasmic vesicle lumen. It is found in the lysosome lumen. The protein resides in the secreted. The protein localises to the nucleus. Functionally, cytokine that binds to TNFRSF6/FAS, a receptor that transduces the apoptotic signal into cells. Involved in cytotoxic T-cell-mediated apoptosis, natural killer cell-mediated apoptosis and in T-cell development. Initiates fratricidal/suicidal activation-induced cell death (AICD) in antigen-activated T-cells contributing to the termination of immune responses. TNFRSF6/FAS-mediated apoptosis also has a role in the induction of peripheral tolerance. Binds to TNFRSF6B/DcR3, a decoy receptor that blocks apoptosis. Its function is as follows. Induces FAS-mediated activation of NF-kappa-B, initiating non-apoptotic signaling pathways. Can induce apoptosis but does not appear to be essential for this process. Cytoplasmic form induces gene transcription inhibition. The protein is Tumor necrosis factor ligand superfamily member 6 (FASLG) of Homo sapiens (Human).